Consider the following 185-residue polypeptide: Ribosome-recycling factor (185 aa).

It belongs to the RRF family.

It is found in the cytoplasm. Its function is as follows. Responsible for the release of ribosomes from messenger RNA at the termination of protein biosynthesis. May increase the efficiency of translation by recycling ribosomes from one round of translation to another. The polypeptide is Ribosome-recycling factor (Haemophilus ducreyi (strain 35000HP / ATCC 700724)).